The following is a 669-amino-acid chain: GTP-binding protein 1 (669 aa).

The interval 1–32 (MATERSRSAMDSPVPASMFAPEPSSPGAARAA) is disordered. Phosphoserine is present on residues serine 6, serine 8, serine 12, serine 24, serine 25, serine 44, serine 47, and serine 69. The tr-type G domain maps to 158–389 (FLEVRVAVVG…LNLLSPRTSY (232 aa)). The tract at residues 167–174 (GNVDAGKS) is G1. Residue 167–174 (GNVDAGKS) coordinates GTP. The G2 stretch occupies residues 206–210 (GRTSS). Positions 252–255 (DLAG) are G3. GTP contacts are provided by residues 252–256 (DLAGH) and 308–311 (TKID). The tract at residues 308–311 (TKID) is G4. Positions 366–368 (SNV) are G5. Positions 573–595 (LLQTTNNSPMNSKPQQIKMQSTK) are enriched in polar residues. The tract at residues 573–669 (LLQTTNNSPM…GACVTPASGC (97 aa)) is disordered. Phosphoserine is present on serine 580. Over residues 646-657 (GRRRGGQRHKVK) the composition is skewed to basic residues.

The protein belongs to the TRAFAC class translation factor GTPase superfamily. Classic translation factor GTPase family. GTPBP1 subfamily. Interacts with EXOSC2/RRP4, EXOSC3/RRP40, EXOSC5/RRP46, HNRNPD, HNRNPR and SYNCRIP. Identified in a complex with AANAT mRNA, but does not bind mRNA by itself.

The protein localises to the cytoplasm. Promotes degradation of target mRNA species. Plays a role in the regulation of circadian mRNA stability. Binds GTP and has GTPase activity. This Homo sapiens (Human) protein is GTP-binding protein 1 (GTPBP1).